Here is a 210-residue protein sequence, read N- to C-terminus: Large ribosomal subunit protein uL3 (210 aa).

A compositionally biased stretch (basic residues) spans 132–144 (GPMKHGSKYHRRP). A disordered region spans residues 132–152 (GPMKHGSKYHRRPGSAGAKGP).

This sequence belongs to the universal ribosomal protein uL3 family. Part of the 50S ribosomal subunit. Forms a cluster with proteins L14 and L19.

Its function is as follows. One of the primary rRNA binding proteins, it binds directly near the 3'-end of the 23S rRNA, where it nucleates assembly of the 50S subunit. This chain is Large ribosomal subunit protein uL3, found in Heliobacterium modesticaldum (strain ATCC 51547 / Ice1).